A 466-amino-acid polypeptide reads, in one-letter code: L-seryl-tRNA(Sec) selenium transferase (466 aa).

An N6-(pyridoxal phosphate)lysine modification is found at Lys-292.

The protein belongs to the SelA family. Pyridoxal 5'-phosphate serves as cofactor.

The protein localises to the cytoplasm. It carries out the reaction L-seryl-tRNA(Sec) + selenophosphate + H(+) = L-selenocysteinyl-tRNA(Sec) + phosphate. It functions in the pathway aminoacyl-tRNA biosynthesis; selenocysteinyl-tRNA(Sec) biosynthesis; selenocysteinyl-tRNA(Sec) from L-seryl-tRNA(Sec) (bacterial route): step 1/1. Its function is as follows. Converts seryl-tRNA(Sec) to selenocysteinyl-tRNA(Sec) required for selenoprotein biosynthesis. This chain is L-seryl-tRNA(Sec) selenium transferase, found in Rhizobium meliloti (strain 1021) (Ensifer meliloti).